Consider the following 142-residue polypeptide: Large ribosomal subunit protein uL13 (142 aa).

This sequence belongs to the universal ribosomal protein uL13 family. In terms of assembly, part of the 50S ribosomal subunit.

This protein is one of the early assembly proteins of the 50S ribosomal subunit, although it is not seen to bind rRNA by itself. It is important during the early stages of 50S assembly. The polypeptide is Large ribosomal subunit protein uL13 (Caldicellulosiruptor saccharolyticus (strain ATCC 43494 / DSM 8903 / Tp8T 6331)).